A 373-amino-acid polypeptide reads, in one-letter code: Queuine tRNA-ribosyltransferase (373 aa).

Asp-89 (proton acceptor) is an active-site residue. Substrate-binding positions include 89–93 (DSGGF), Asp-143, Gln-185, and Gly-212. An RNA binding region spans residues 243 to 249 (GVGRPED). Residue Asp-262 is the Nucleophile of the active site. Positions 267 to 271 (TRNAR) are RNA binding; important for wobble base 34 recognition. Zn(2+) is bound by residues Cys-300, Cys-302, Cys-305, and His-331.

This sequence belongs to the queuine tRNA-ribosyltransferase family. Homodimer. Within each dimer, one monomer is responsible for RNA recognition and catalysis, while the other monomer binds to the replacement base PreQ1. It depends on Zn(2+) as a cofactor.

It carries out the reaction 7-aminomethyl-7-carbaguanine + guanosine(34) in tRNA = 7-aminomethyl-7-carbaguanosine(34) in tRNA + guanine. Its pathway is tRNA modification; tRNA-queuosine biosynthesis. Its function is as follows. Catalyzes the base-exchange of a guanine (G) residue with the queuine precursor 7-aminomethyl-7-deazaguanine (PreQ1) at position 34 (anticodon wobble position) in tRNAs with GU(N) anticodons (tRNA-Asp, -Asn, -His and -Tyr). Catalysis occurs through a double-displacement mechanism. The nucleophile active site attacks the C1' of nucleotide 34 to detach the guanine base from the RNA, forming a covalent enzyme-RNA intermediate. The proton acceptor active site deprotonates the incoming PreQ1, allowing a nucleophilic attack on the C1' of the ribose to form the product. After dissociation, two additional enzymatic reactions on the tRNA convert PreQ1 to queuine (Q), resulting in the hypermodified nucleoside queuosine (7-(((4,5-cis-dihydroxy-2-cyclopenten-1-yl)amino)methyl)-7-deazaguanosine). The chain is Queuine tRNA-ribosyltransferase from Marinobacter nauticus (strain ATCC 700491 / DSM 11845 / VT8) (Marinobacter aquaeolei).